The following is a 230-amino-acid chain: RING finger protein 141 (230 aa).

Residue Gly2 is the site of N-myristoyl glycine attachment. The segment at 155-192 adopts an RING-type zinc-finger fold; that stretch reads CCICMDGRADLILPCAHSFCQKCIDKWSDRHRNCPICR.

It localises to the membrane. Functionally, may be involved in spermatogenesis. The chain is RING finger protein 141 (RNF141) from Pongo abelii (Sumatran orangutan).